A 75-amino-acid polypeptide reads, in one-letter code: UPF0291 protein lmo1304 (75 aa).

The disordered stretch occupies residues 56–75; that stretch reads DPNGKDVTPHKVKQLRKNKY. Basic residues predominate over residues 65–75; that stretch reads HKVKQLRKNKY.

Belongs to the UPF0291 family.

It localises to the cytoplasm. The protein is UPF0291 protein lmo1304 of Listeria monocytogenes serovar 1/2a (strain ATCC BAA-679 / EGD-e).